We begin with the raw amino-acid sequence, 72 residues long: uncharacterized protein (72 aa).

It belongs to the baculoviridae 8 kDa protein family.

This is an uncharacterized protein from Orgyia pseudotsugata (Douglas-fir tussock moth).